Reading from the N-terminus, the 850-residue chain is AdoMet-dependent rRNA methyltransferase SPB1 (850 aa).

Positions 58, 60, 78, 94, and 119 each coordinate S-adenosyl-L-methionine. The active-site Proton acceptor is the lysine 159. Positions 273 to 282 (GETNEMTWTP) are enriched in polar residues. Disordered stretches follow at residues 273 to 305 (GETNEMTWTPRSIKEGEVDEEEEKEKDKEARDE), 388 to 414 (IDKELSELGEREKARKKRERRRRNEMK), 529 to 569 (GISD…RTLN), and 620 to 646 (AKKNGLEYSDSEDEEDDIVMETQKQDD). The segment covering 388 to 400 (IDKELSELGEREK) has biased composition (basic and acidic residues). The stretch at 397-425 (EREKARKKRERRRRNEMKQREIQRMQMNM) forms a coiled coil. The span at 401–411 (ARKKRERRRRN) shows a compositional bias: basic residues. 2 stretches are compositionally biased toward acidic residues: residues 537–561 (DESDGEMSADDVDMATIDDGEDEDD) and 628–638 (SDSEDEEDDIV). A coiled-coil region spans residues 746 to 773 (LEAKGRKKMRALRRLEQMKKKSELINED). Residues 811–850 (KNKGIAGRPRGVTGKYKMVDGTMKKEQRAIRRIKKKMGKK) are disordered. Positions 840–850 (IRRIKKKMGKK) are enriched in basic residues.

The protein belongs to the class I-like SAM-binding methyltransferase superfamily. RNA methyltransferase RlmE family. SPB1 subfamily. As to quaternary structure, component of the nucleolar and nucleoplasmic pre-60S ribosomal particle.

It localises to the nucleus. The protein resides in the nucleolus. The catalysed reaction is a ribonucleotide in rRNA + S-adenosyl-L-methionine = a 2'-O-methylribonucleotide in rRNA + S-adenosyl-L-homocysteine + H(+). Required for proper assembly of pre-ribosomal particles during the biogenesis of the 60S ribosomal subunit. The polypeptide is AdoMet-dependent rRNA methyltransferase SPB1 (Yarrowia lipolytica (strain CLIB 122 / E 150) (Yeast)).